Consider the following 298-residue polypeptide: Bifunctional protein FolD (298 aa).

NADP(+) contacts are provided by residues 166–168 (GRS), Ser-195, and Ile-236.

The protein belongs to the tetrahydrofolate dehydrogenase/cyclohydrolase family. Homodimer.

The enzyme catalyses (6R)-5,10-methylene-5,6,7,8-tetrahydrofolate + NADP(+) = (6R)-5,10-methenyltetrahydrofolate + NADPH. The catalysed reaction is (6R)-5,10-methenyltetrahydrofolate + H2O = (6R)-10-formyltetrahydrofolate + H(+). Its pathway is one-carbon metabolism; tetrahydrofolate interconversion. Its function is as follows. Catalyzes the oxidation of 5,10-methylenetetrahydrofolate to 5,10-methenyltetrahydrofolate and then the hydrolysis of 5,10-methenyltetrahydrofolate to 10-formyltetrahydrofolate. In Chlorobium phaeobacteroides (strain BS1), this protein is Bifunctional protein FolD.